Here is a 448-residue protein sequence, read N- to C-terminus: Noelin-2 (448 aa).

The signal sequence occupies residues 1 to 14 (MRKLRQTGTTIAGG). Coiled coils occupy residues 52–79 (RDGRSRELRQLMEKVQNVSQSMEVLELR) and 130–187 (LEQY…AQKL). 6 N-linked (GlcNAc...) asparagine glycosylation sites follow: N68, N149, N269, N304, N393, and N435. Residues 188–440 (GCGKLTGVSN…QVLYNVTLFH (253 aa)) enclose the Olfactomedin-like domain. An intrachain disulfide couples C189 to C371.

As to quaternary structure, peripherally associated with AMPAR complex. AMPAR complex consists of an inner core made of 4 pore-forming GluA/GRIA proteins (GRIA1, GRIA2, GRIA3 and GRIA4) and 4 major auxiliary subunits arranged in a twofold symmetry. One of the two pairs of distinct binding sites is occupied either by CNIH2, CNIH3 or CACNG2, CACNG3. The other harbors CACNG2, CACNG3, CACNG4, CACNG8 or GSG1L. This inner core of AMPAR complex is complemented by outer core constituents binding directly to the GluA/GRIA proteins at sites distinct from the interaction sites of the inner core constituents. Outer core constituents include at least PRRT1, PRRT2, CKAMP44/SHISA9, FRRS1L and NRN1. The proteins of the inner and outer core serve as a platform for other, more peripherally associated AMPAR constituents, including OLFM2. Alone or in combination, these auxiliary subunits control the gating and pharmacology of the AMPAR complex and profoundly impact their biogenesis and protein processing. Interacts with GRIA2. Interacts with OLFM1 and OLFM3. Interacts with SRF; the interaction promotes dissociation of SRF from the transcriptional repressor HEY2. Interacts with RUNX2. As to expression, expressed in the brain (at protein level). In the developing eye, first detected at 12 dpc in the retinal pigmented epithelium and preferentially expressed in differentiating retinal ganglion cells between 15 and 18 dpc. In the brain, expression is detected mainly in the olfactory bulb, cortex, piriform cortex, olfactory trabeculae, and inferior and superior colliculus. In the adult eye, expression is detected mainly in retinal ganglion cells. Expressed in carotid arteries.

Its subcellular location is the secreted. The protein localises to the synapse. The protein resides in the membrane. It localises to the nucleus. It is found in the cytoplasm. Functionally, involved in transforming growth factor beta (TGF-beta)-induced smooth muscle differentiation. TGF-beta induces expression and nuclear translocation of OLFM2 where it binds to SRF, causing its dissociation from the transcriptional repressor HEY2/HERP1 and facilitating binding of SRF to target genes. Plays a role in AMPAR complex organization. Is a regulator of vascular smooth-muscle cell (SMC) phenotypic switching, that acts by promoting RUNX2 and inhibiting MYOCD binding to SRF. SMC phenotypic switching is the process through which vascular SMCs undergo transition between a quiescent contractile phenotype and a proliferative synthetic phenotype in response to pathological stimuli. SMC phenotypic plasticity is essential for vascular development and remodeling. This is Noelin-2 (Olfm2) from Mus musculus (Mouse).